A 493-amino-acid chain; its full sequence is Endothelial lipase (493 aa).

A signal peptide spans 1–23; that stretch reads MRDPVFLLGFWSLYCCFPAGSLT. Cysteine 66 and cysteine 79 form a disulfide bridge. N-linked (GlcNAc...) asparagine glycosylation is found at asparagine 67 and asparagine 82. The active-site Nucleophile is the serine 171. The active-site Charge relay system is aspartate 195. A disulfide bond links cysteine 254 and cysteine 274. Histidine 276 functions as the Charge relay system in the catalytic mechanism. 2 cysteine pairs are disulfide-bonded: cysteine 299–cysteine 318 and cysteine 310–cysteine 313. 327 to 339 lines the heparin pocket; sequence KMRKKRNSKMYLK. The PLAT domain occupies 349–484; sequence YHYQLKVHMF…SPGQELWFYK (136 aa). Asparagine 395 carries N-linked (GlcNAc...) asparagine glycosylation. Cysteine 465 and cysteine 485 are disulfide-bonded.

It belongs to the AB hydrolase superfamily. Lipase family. Head to tail Homodimer. Interacts with apolipoprotein C-2.

The protein resides in the secreted. The catalysed reaction is a triacylglycerol + H2O = a diacylglycerol + a fatty acid + H(+). It carries out the reaction a 1,2-diacyl-sn-glycero-3-phosphocholine + H2O = a 2-acyl-sn-glycero-3-phosphocholine + a fatty acid + H(+). The enzyme catalyses 1,2,3-tri-(9Z-octadecenoyl)-glycerol + H2O = di-(9Z)-octadecenoylglycerol + (9Z)-octadecenoate + H(+). It catalyses the reaction 1,2,3-tributanoylglycerol + H2O = dibutanoylglycerol + butanoate + H(+). The catalysed reaction is 1,2-dihexadecanoyl-sn-glycero-3-phosphocholine + H2O = hexadecanoyl-sn-glycero-3-phosphocholine + hexadecanoate + H(+). Exerts both phospholipase and triglyceride lipase activities. More active as a phospholipase than a triglyceride lipase. Hydrolyzes triglycerides, both with short-chain fatty acyl groups (tributyrin) and long-chain fatty acyl groups (triolein) with similar levels of activity toward both types of substrates. Hydrolyzes high density lipoproteins (HDL) more efficiently than other lipoproteins. The chain is Endothelial lipase (Lipg) from Rattus norvegicus (Rat).